The primary structure comprises 810 residues: Hemoglobin-haptoglobin utilization protein B (810 aa).

The N-terminal stretch at Met1 to Ala22 is a signal peptide. Residues Asn34–Lys166 enclose the TBDR plug domain. Residues Asp175–Phe810 enclose the TBDR beta-barrel domain. The TonB C-terminal box signature appears at Gln793 to Phe810.

This sequence belongs to the TonB-dependent receptor family.

The protein resides in the cell outer membrane. Its function is as follows. Acts as a receptor for hemoglobin or the hemoglobin/haptoglobin complex and is required for heme uptake. This Neisseria meningitidis serogroup C protein is Hemoglobin-haptoglobin utilization protein B (hpuB).